We begin with the raw amino-acid sequence, 311 residues long: 4-diphosphocytidyl-2-C-methyl-D-erythritol kinase (311 aa).

The active site involves K10. 105–115 (PVAGGMAGGSA) provides a ligand contact to ATP. D146 is an active-site residue.

Belongs to the GHMP kinase family. IspE subfamily.

The catalysed reaction is 4-CDP-2-C-methyl-D-erythritol + ATP = 4-CDP-2-C-methyl-D-erythritol 2-phosphate + ADP + H(+). It participates in isoprenoid biosynthesis; isopentenyl diphosphate biosynthesis via DXP pathway; isopentenyl diphosphate from 1-deoxy-D-xylulose 5-phosphate: step 3/6. Its function is as follows. Catalyzes the phosphorylation of the position 2 hydroxy group of 4-diphosphocytidyl-2C-methyl-D-erythritol. This chain is 4-diphosphocytidyl-2-C-methyl-D-erythritol kinase, found in Corynebacterium glutamicum (strain ATCC 13032 / DSM 20300 / JCM 1318 / BCRC 11384 / CCUG 27702 / LMG 3730 / NBRC 12168 / NCIMB 10025 / NRRL B-2784 / 534).